A 277-amino-acid chain; its full sequence is 4-hydroxybenzoate octaprenyltransferase (277 aa).

The next 8 helical transmembrane spans lie at 24 to 44 (FAAA…LGVI), 81 to 101 (VEAK…DLSL), 102 to 122 (NQYA…YPFM), 129 to 149 (PQVV…GAVI), 152 to 172 (LPLT…AYDT), 201 to 221 (IIAL…WLSE), 224 to 244 (IGYF…CWLT), and 255 to 275 (AFLN…VGIY).

This sequence belongs to the UbiA prenyltransferase family. It depends on Mg(2+) as a cofactor.

It is found in the cell inner membrane. The catalysed reaction is all-trans-octaprenyl diphosphate + 4-hydroxybenzoate = 4-hydroxy-3-(all-trans-octaprenyl)benzoate + diphosphate. Its pathway is cofactor biosynthesis; ubiquinone biosynthesis. Functionally, catalyzes the prenylation of para-hydroxybenzoate (PHB) with an all-trans polyprenyl group. Mediates the second step in the final reaction sequence of ubiquinone-8 (UQ-8) biosynthesis, which is the condensation of the polyisoprenoid side chain with PHB, generating the first membrane-bound Q intermediate 3-octaprenyl-4-hydroxybenzoate. This Haemophilus ducreyi (strain 35000HP / ATCC 700724) protein is 4-hydroxybenzoate octaprenyltransferase.